We begin with the raw amino-acid sequence, 491 residues long: Cytochrome P450 2F2 (491 aa).

Cysteine 436 contributes to the heme binding site.

The protein belongs to the cytochrome P450 family. Heme is required as a cofactor.

It is found in the endoplasmic reticulum membrane. Its subcellular location is the microsome membrane. Functionally, involved in the regio- and stereoselective transformation of naphthalene to trans-1R-hydroxy-2R-glutathionyl-1,2-dihydronaphthalene in the presence of glutathione and glutathione S-transferases. It specifically catalyzes the production of a very reactive and potentially toxic intermediate, the 2R,2S arene oxide, that is associated with necrosis of the unciliated bronchiolar epithelial cells or club cells in lung. This chain is Cytochrome P450 2F2 (Cyp2f2), found in Rattus norvegicus (Rat).